A 95-amino-acid chain; its full sequence is Defensin-like protein 247 (95 aa).

The N-terminal stretch at 1–24 (MKFAAIFLVTCVFFSLFSSNLSQG) is a signal peptide. 4 disulfide bridges follow: cysteine 37–cysteine 94, cysteine 48–cysteine 77, cysteine 56–cysteine 87, and cysteine 75–cysteine 89.

It belongs to the DEFL family.

It localises to the secreted. In Arabidopsis thaliana (Mouse-ear cress), this protein is Defensin-like protein 247 (SCRL6).